A 156-amino-acid chain; its full sequence is ATP synthase subunit b (156 aa).

A helical transmembrane segment spans residues 7–27; that stretch reads LIGQTVAFIIFVWFCMKFVWP.

Belongs to the ATPase B chain family. In terms of assembly, F-type ATPases have 2 components, F(1) - the catalytic core - and F(0) - the membrane proton channel. F(1) has five subunits: alpha(3), beta(3), gamma(1), delta(1), epsilon(1). F(0) has three main subunits: a(1), b(2) and c(10-14). The alpha and beta chains form an alternating ring which encloses part of the gamma chain. F(1) is attached to F(0) by a central stalk formed by the gamma and epsilon chains, while a peripheral stalk is formed by the delta and b chains.

Its subcellular location is the cell inner membrane. F(1)F(0) ATP synthase produces ATP from ADP in the presence of a proton or sodium gradient. F-type ATPases consist of two structural domains, F(1) containing the extramembraneous catalytic core and F(0) containing the membrane proton channel, linked together by a central stalk and a peripheral stalk. During catalysis, ATP synthesis in the catalytic domain of F(1) is coupled via a rotary mechanism of the central stalk subunits to proton translocation. Functionally, component of the F(0) channel, it forms part of the peripheral stalk, linking F(1) to F(0). This is ATP synthase subunit b from Shewanella oneidensis (strain ATCC 700550 / JCM 31522 / CIP 106686 / LMG 19005 / NCIMB 14063 / MR-1).